Reading from the N-terminus, the 148-residue chain is ATP synthase epsilon chain (148 aa).

It belongs to the ATPase epsilon chain family. As to quaternary structure, F-type ATPases have 2 components, CF(1) - the catalytic core - and CF(0) - the membrane proton channel. CF(1) has five subunits: alpha(3), beta(3), gamma(1), delta(1), epsilon(1). CF(0) has three main subunits: a, b and c.

The protein resides in the cell inner membrane. Functionally, produces ATP from ADP in the presence of a proton gradient across the membrane. In Paracoccus denitrificans (strain Pd 1222), this protein is ATP synthase epsilon chain.